A 142-amino-acid chain; its full sequence is Nucleoside diphosphate kinase (142 aa).

The ATP site is built by Lys-11, Phe-59, Arg-87, Thr-93, Arg-104, and Asn-114. His-117 serves as the catalytic Pros-phosphohistidine intermediate.

Belongs to the NDK family. Homotetramer. The cofactor is Mg(2+).

The protein localises to the cytoplasm. It catalyses the reaction a 2'-deoxyribonucleoside 5'-diphosphate + ATP = a 2'-deoxyribonucleoside 5'-triphosphate + ADP. The catalysed reaction is a ribonucleoside 5'-diphosphate + ATP = a ribonucleoside 5'-triphosphate + ADP. Major role in the synthesis of nucleoside triphosphates other than ATP. The ATP gamma phosphate is transferred to the NDP beta phosphate via a ping-pong mechanism, using a phosphorylated active-site intermediate. In Yersinia pestis bv. Antiqua (strain Antiqua), this protein is Nucleoside diphosphate kinase.